A 557-amino-acid polypeptide reads, in one-letter code: Urocanate hydratase (557 aa).

NAD(+)-binding positions include 53–54, Gln-131, 177–179, 197–202, 243–244, 264–268, 274–275, and 323–324; these read GG, GMG, ECQQSR, NA, QTSAH, YL, and YG. Cys-411 is an active-site residue. NAD(+)-binding positions include 455–456 and Gly-493; that span reads RE.

Homodimer. It depends on NAD(+) as a cofactor.

Its subcellular location is the cytoplasm. The catalysed reaction is 4-imidazolone-5-propanoate = trans-urocanate + H2O. It functions in the pathway amino-acid degradation; L-histidine degradation into L-glutamate; N-formimidoyl-L-glutamate from L-histidine: step 2/3. In terms of biological role, catalyzes the conversion of urocanate to 4-imidazolone-5-propionate. The polypeptide is Urocanate hydratase (Pseudomonas putida (Arthrobacter siderocapsulatus)).